We begin with the raw amino-acid sequence, 523 residues long: Cytochrome P450 52A3-B (523 aa).

The chain crosses the membrane as a helical span at residues 17–34; the sequence is WYTILFGAAFTYFLSIAL. Residue Cys471 coordinates heme.

Belongs to the cytochrome P450 family. Heme is required as a cofactor.

Its subcellular location is the membrane. In terms of biological role, together with an NADPH cytochrome P450 the enzyme system catalyzes the terminal hydroxylation as the first step in the assimilation of alkanes and fatty acids. This chain is Cytochrome P450 52A3-B (CYP52A3-B), found in Candida maltosa (Yeast).